The primary structure comprises 307 residues: Acyl transferase (307 aa).

Catalysis depends on charge relay system residues Ser-116, Asp-213, and His-243.

The protein belongs to the LuxD family.

It participates in lipid metabolism; fatty acid reduction for biolumincescence. In terms of biological role, acyl transferase is part of the fatty acid reductase system required for aldehyde biosynthesis; it produces fatty acids for the luminescent reaction. This is Acyl transferase from Photorhabdus luminescens (Xenorhabdus luminescens).